The sequence spans 276 residues: MHFHFSKMHGLGNDFMVVDCITQNVYFSQELIRRLADRHTGVGFDQLLVVEAPYDPETDFHYRIFNADGSEVEQCGNGARCFARFVRMKGLTNKYSISVSTKKGKMILDVEEDDQITVNMGVPEFEPNKIPFRAKQKEKTYIMRVGEKTLFCGAVSMGNPHVVTVVDDVDSAEVETLGPLLESHERFPERVNAGFMQVVNREQIRLRVYERGAGETQACGSGACGAVAVGILQGLLDENVTVSLPGGDLHIHWQGPGKPLYMTGPATHVFDGQLSC.

Asparagine 13, glutamine 46, and asparagine 66 together coordinate substrate. Residue cysteine 75 is the Proton donor of the active site. Residues 76–77 (GN), asparagine 159, asparagine 192, and 210–211 (ER) contribute to the substrate site. Residue cysteine 219 is the Proton acceptor of the active site. 220-221 (GS) contributes to the substrate binding site.

It belongs to the diaminopimelate epimerase family. As to quaternary structure, homodimer.

The protein resides in the cytoplasm. It carries out the reaction (2S,6S)-2,6-diaminopimelate = meso-2,6-diaminopimelate. It participates in amino-acid biosynthesis; L-lysine biosynthesis via DAP pathway; DL-2,6-diaminopimelate from LL-2,6-diaminopimelate: step 1/1. Functionally, catalyzes the stereoinversion of LL-2,6-diaminopimelate (L,L-DAP) to meso-diaminopimelate (meso-DAP), a precursor of L-lysine and an essential component of the bacterial peptidoglycan. In Vibrio vulnificus (strain CMCP6), this protein is Diaminopimelate epimerase.